A 486-amino-acid polypeptide reads, in one-letter code: Ribulose bisphosphate carboxylase large chain 1 (486 aa).

Substrate-binding residues include asparagine 125 and threonine 175. The active-site Proton acceptor is lysine 177. Lysine 179 is a binding site for substrate. Residues lysine 203, aspartate 205, and glutamate 206 each contribute to the Mg(2+) site. The residue at position 203 (lysine 203) is an N6-carboxylysine. Histidine 295 serves as the catalytic Proton acceptor. Substrate is bound by residues arginine 296, histidine 328, and serine 380.

Belongs to the RuBisCO large chain family. Type I subfamily. As to quaternary structure, heterohexadecamer of 8 large chains and 8 small chains. Mg(2+) serves as cofactor.

The enzyme catalyses 2 (2R)-3-phosphoglycerate + 2 H(+) = D-ribulose 1,5-bisphosphate + CO2 + H2O. The catalysed reaction is D-ribulose 1,5-bisphosphate + O2 = 2-phosphoglycolate + (2R)-3-phosphoglycerate + 2 H(+). In terms of biological role, ruBisCO catalyzes two reactions: the carboxylation of D-ribulose 1,5-bisphosphate, the primary event in carbon dioxide fixation, as well as the oxidative fragmentation of the pentose substrate. Both reactions occur simultaneously and in competition at the same active site. This Bradyrhizobium sp. (strain ORS 278) protein is Ribulose bisphosphate carboxylase large chain 1.